Consider the following 397-residue polypeptide: Argininosuccinate synthase (397 aa).

An ATP-binding site is contributed by 8–16 (AYSGGLDTS). Tyrosine 86 and serine 91 together coordinate L-citrulline. ATP is bound at residue glycine 116. Positions 118, 122, and 123 each coordinate L-aspartate. Asparagine 122 contacts L-citrulline. The L-citrulline site is built by arginine 126, serine 175, serine 184, glutamate 260, and tyrosine 272.

It belongs to the argininosuccinate synthase family. Type 1 subfamily. In terms of assembly, homotetramer.

Its subcellular location is the cytoplasm. It carries out the reaction L-citrulline + L-aspartate + ATP = 2-(N(omega)-L-arginino)succinate + AMP + diphosphate + H(+). The protein operates within amino-acid biosynthesis; L-arginine biosynthesis; L-arginine from L-ornithine and carbamoyl phosphate: step 2/3. This Clostridium botulinum (strain ATCC 19397 / Type A) protein is Argininosuccinate synthase.